The chain runs to 326 residues: MIDFASFYQVIAKSRLSHWLHTLPAQLNAWENSERHGNLPKWQRVLTKLEHYQSSHVNLSDRVEIGQPGEISAGETRKLENLLQHFHPWRKGPFYLFGIHIDTEWRSDWKWDRVLPHISPLKDRYVLDVGCGSGYHLWRMRGEGAELAVGIDPAALFLCQFTAVKQLGGNDPQVHFLPLGIQELPPLRAFDTVFSMGVLYHRRSPIDHIYQLKDQLRDGGELVLETLIVDGDENTVLVPDDRYAQMNNVWFLPSPAAMIKWLKKCGFQDVRMVDEDVTTTDEQRKTEWMQNDSLAQYLMPDDPTRTIEGYPAPKRAVFVATRGSED.

Carboxy-S-adenosyl-L-methionine contacts are provided by lysine 91, tryptophan 105, lysine 110, glycine 130, methionine 196, tyrosine 200, and arginine 315.

This sequence belongs to the class I-like SAM-binding methyltransferase superfamily. CmoB family. In terms of assembly, homotetramer.

It catalyses the reaction carboxy-S-adenosyl-L-methionine + 5-hydroxyuridine(34) in tRNA = 5-carboxymethoxyuridine(34) in tRNA + S-adenosyl-L-homocysteine + H(+). Functionally, catalyzes carboxymethyl transfer from carboxy-S-adenosyl-L-methionine (Cx-SAM) to 5-hydroxyuridine (ho5U) to form 5-carboxymethoxyuridine (cmo5U) at position 34 in tRNAs. The chain is tRNA U34 carboxymethyltransferase from Tolumonas auensis (strain DSM 9187 / NBRC 110442 / TA 4).